Here is a 705-residue protein sequence, read N- to C-terminus: MLKLFSAFRKDKIWDFDGGIHPPEMKTQSNGTPLRQVPLAPRFIIPLKQHIGAEGELCVNVGDRVLRGQPLTRGRGRMLPVHAPTSGKVIAITPHSTAHPSALAELSVMIDADGEDRWIERDGWADYQRRSREELITRIHQFGVAGLGGAGFPTGVKLQGGGDKIETLIINAAECEPYITADDRLMQDCAAQVVEGIRILAHILQPREVLIGIEDNKPQAISMLRAVLADAHDIALRVIPTKYPSGGAKQLTQILTGKQVPHGGRSSDIGVLMQNVGTAYAVKRAVIDGEPITERVVTLTGESVSRPGNVWARLGTPVSHLLNDAGFCSSADQMVIMGGPLMGFTLPWLDVPVVKITNCLLAPSATEMGETPEEQGCIRCSACADACPADLLPQQLYWFSKGQQHDKATAHNIADCIECGACAWVCPSSIPLVQYFRQEKAEIYAIAQEEKRAAEAKARFEARQARLEREKAARLERHKNAAAQPAAKDQDAIAAALARVKEKQAQATQPVVINAGEKPDNSAVIAAREARKAQARARQAENIPAATEPVEPVDPRKAAVEAAIARAKARKQEQQTAAEPTEPVDPRKAAVEAAIARAKARKQEQQTAAEPTEPVDPRKAAVEAAIARAKARKQEQQAAAEPTEPVDPRKAAVEAAIARAKARKQEQQAAAEPAEPVDPRKAAVAAAIARVQAKKAAQQQVVNEE.

4Fe-4S ferredoxin-type domains follow at residues 368–397 and 407–435; these read MGET…QQLY and KATA…LVQY. [4Fe-4S] cluster contacts are provided by cysteine 377, cysteine 380, cysteine 383, cysteine 387, cysteine 416, cysteine 419, cysteine 422, and cysteine 426. The segment at 536 to 684 is disordered; it reads RARQAENIPA…EPVDPRKAAV (149 aa).

Belongs to the 4Fe4S bacterial-type ferredoxin family. RnfC subfamily. As to quaternary structure, the complex is composed of six subunits: RnfA, RnfB, RnfC, RnfD, RnfE and RnfG. The cofactor is [4Fe-4S] cluster.

Its subcellular location is the cell inner membrane. Part of a membrane-bound complex that couples electron transfer with translocation of ions across the membrane. The chain is Ion-translocating oxidoreductase complex subunit C from Citrobacter koseri (strain ATCC BAA-895 / CDC 4225-83 / SGSC4696).